A 1068-amino-acid polypeptide reads, in one-letter code: Receptor-like protein 13 (1068 aa).

Residues 1-23 form the signal peptide; the sequence is MEGKLFLGQYLICVILLLGQLHG. Topologically, residues 24–986 are extracellular; it reads YKSCIEKERK…EADESTVDME (963 aa). Residues Asn59 and Asn97 are each glycosylated (N-linked (GlcNAc...) asparagine). LRR repeat units follow at residues 104-129, 139-162, 164-187, 188-212, 216-239, 241-264, 265-290, 292-315, 325-349, 350-373, 375-397, 398-423, 424-447, 448-471, 472-497, 499-517, 519-543, 544-567, and 569-594; these read FEDV…LFDD, LRNL…FLNA, TSLT…EFKD, LTNL…DYNS, FRKL…FLNS, TSLK…ELRD, LTNV…LFAL, KLKA…KFAK, WKNM…LTSL, TGLR…LANL, SLEY…LLAN, LSKL…SWKP, KFQL…LLHQ, KDLH…LLEN, NTKL…AHNL, FLNV…NFGW, LPHL…LDNM, KSIE…FLKG, and YNLT…NFTR. Asn153 carries an N-linked (GlcNAc...) asparagine glycan. Asn202 carries an N-linked (GlcNAc...) asparagine glycan. N-linked (GlcNAc...) asparagine glycosylation is present at Asn279. N-linked (GlcNAc...) asparagine glycosylation is present at Asn397. Asn471, Asn482, and Asn501 each carry an N-linked (GlcNAc...) asparagine glycan. 2 N-linked (GlcNAc...) asparagine glycosylation sites follow: Asn570 and Asn591. The LRR 20; degenerate repeat unit spans residues 596 to 615; the sequence is WVMSMDNNLFTGNIGKGFRS. 5 LRR repeats span residues 616–639, 641–664, 665–688, 690–710, and 711–734; these read LPSL…WIGE, QGLF…LFNI, SYLQ…VSSI, HGAV…DTLL, and LNVI…INTQ. Asn663 carries N-linked (GlcNAc...) asparagine glycosylation. Asn700 carries N-linked (GlcNAc...) asparagine glycosylation. 5 N-linked (GlcNAc...) asparagine glycosylation sites follow: Asn735, Asn745, Asn771, Asn780, and Asn822. LRR repeat units lie at residues 736–757 and 758–781; these read ISIL…FCSL and SNIQ…LSNT. 4 LRR repeats span residues 846-870, 871-893, 895-918, and 920-943; these read LKLL…LGGL, VELE…SFSG, KNVE…LTDM, and SLAV…QFNT. Asn877 and Asn882 each carry an N-linked (GlcNAc...) asparagine glycan. N-linked (GlcNAc...) asparagine glycosylation is found at Asn925 and Asn930. Residues 987-1007 form a helical membrane-spanning segment; the sequence is SFYWSFVAAYVTILLGILASL. The Cytoplasmic portion of the chain corresponds to 1008–1068; that stretch reads SFDSPWSRAW…PPALFHKTRT (61 aa).

It belongs to the RLP family.

The protein resides in the cell membrane. The chain is Receptor-like protein 13 from Arabidopsis thaliana (Mouse-ear cress).